The chain runs to 254 residues: 5'/3'-nucleotidase SurE (254 aa).

A divalent metal cation-binding residues include Asp9, Asp10, Ser40, and Asn93.

Belongs to the SurE nucleotidase family. A divalent metal cation serves as cofactor.

It localises to the cytoplasm. It catalyses the reaction a ribonucleoside 5'-phosphate + H2O = a ribonucleoside + phosphate. The enzyme catalyses a ribonucleoside 3'-phosphate + H2O = a ribonucleoside + phosphate. It carries out the reaction [phosphate](n) + H2O = [phosphate](n-1) + phosphate + H(+). Functionally, nucleotidase with a broad substrate specificity as it can dephosphorylate various ribo- and deoxyribonucleoside 5'-monophosphates and ribonucleoside 3'-monophosphates with highest affinity to 3'-AMP. Also hydrolyzes polyphosphate (exopolyphosphatase activity) with the preference for short-chain-length substrates (P20-25). Might be involved in the regulation of dNTP and NTP pools, and in the turnover of 3'-mononucleotides produced by numerous intracellular RNases (T1, T2, and F) during the degradation of various RNAs. This Proteus mirabilis (strain HI4320) protein is 5'/3'-nucleotidase SurE.